The sequence spans 22 residues: SAALAGTIIDGASLGFDILNKV.

The plays an important role in the hemolytic activity stretch occupies residues 3–12; sequence ALAGTIIDGA. Positions 11 to 22 are N-terminal region; it reads GASLGFDILNKV.

Belongs to the actinoporin family. Sea anemone subfamily. Octamer or nonamer in membranes. Monomer in the soluble state.

It localises to the secreted. It is found in the nematocyst. The protein resides in the target cell membrane. Functionally, pore-forming protein that forms cations-selective hydrophilic pores of around 1 nm and causes cytolysis. Pore formation is a multi-step process that involves specific recognition of membrane sphingomyelin (but neither cholesterol nor phosphatidylcholine) using aromatic rich region and adjacent phosphocholine (POC) binding site, firm binding to the membrane (mainly driven by hydrophobic interactions) accompanied by the transfer of the N-terminal region to the lipid-water interface and finally pore formation after oligomerization of monomers. In Heteractis magnifica (Magnificent sea anemone), this protein is Magnificalysin II.